Consider the following 821-residue polypeptide: Lon protease (821 aa).

Residues 18–216 (LPLMSLREVV…KVYELLQGEI (199 aa)) enclose the Lon N-terminal domain. ATP is bound at residue 368 to 375 (GPPGVGKT). One can recognise a Lon proteolytic domain in the interval 606–787 (TSQVGVCTGL…DEVLPQALMA (182 aa)). Residues serine 693 and lysine 736 contribute to the active site.

The protein belongs to the peptidase S16 family. As to quaternary structure, homohexamer. Organized in a ring with a central cavity.

It localises to the cytoplasm. The catalysed reaction is Hydrolysis of proteins in presence of ATP.. In terms of biological role, ATP-dependent serine protease that mediates the selective degradation of mutant and abnormal proteins as well as certain short-lived regulatory proteins. Required for cellular homeostasis and for survival from DNA damage and developmental changes induced by stress. Degrades polypeptides processively to yield small peptide fragments that are 5 to 10 amino acids long. Binds to DNA in a double-stranded, site-specific manner. The chain is Lon protease from Nitratidesulfovibrio vulgaris (strain ATCC 29579 / DSM 644 / CCUG 34227 / NCIMB 8303 / VKM B-1760 / Hildenborough) (Desulfovibrio vulgaris).